The sequence spans 215 residues: Cytochrome b6 (215 aa).

Residues 32–52 (IFYCLGGITLTCFLVQVATGF) traverse the membrane as a helical segment. Cys-35 lines the heme c pocket. Residues His-86 and His-100 each coordinate heme b. Transmembrane regions (helical) follow at residues 90-110 (ASMM…TGGF), 116-136 (LTWV…VTGY), and 186-206 (LHTF…FLMI). Residues His-187 and His-202 each coordinate heme b.

This sequence belongs to the cytochrome b family. PetB subfamily. In terms of assembly, the 4 large subunits of the cytochrome b6-f complex are cytochrome b6, subunit IV (17 kDa polypeptide, PetD), cytochrome f and the Rieske protein, while the 4 small subunits are PetG, PetL, PetM and PetN. The complex functions as a dimer. The cofactor is heme b. Heme c is required as a cofactor.

The protein localises to the plastid. Its subcellular location is the chloroplast thylakoid membrane. Its function is as follows. Component of the cytochrome b6-f complex, which mediates electron transfer between photosystem II (PSII) and photosystem I (PSI), cyclic electron flow around PSI, and state transitions. The chain is Cytochrome b6 from Eucalyptus globulus subsp. globulus (Tasmanian blue gum).